The primary structure comprises 252 residues: Pyridoxine 5'-phosphate synthase (252 aa).

2 residues coordinate 3-amino-2-oxopropyl phosphate: Asn8 and Arg19. Catalysis depends on His44, which acts as the Proton acceptor. The 1-deoxy-D-xylulose 5-phosphate site is built by Arg46 and His51. The active-site Proton acceptor is the Glu75. Thr110 contributes to the 1-deoxy-D-xylulose 5-phosphate binding site. Residue His201 is the Proton donor of the active site. Residues Asp202 and 224–225 contribute to the 3-amino-2-oxopropyl phosphate site; that span reads GH.

Belongs to the PNP synthase family. Homooctamer; tetramer of dimers.

The protein resides in the cytoplasm. The catalysed reaction is 3-amino-2-oxopropyl phosphate + 1-deoxy-D-xylulose 5-phosphate = pyridoxine 5'-phosphate + phosphate + 2 H2O + H(+). Its pathway is cofactor biosynthesis; pyridoxine 5'-phosphate biosynthesis; pyridoxine 5'-phosphate from D-erythrose 4-phosphate: step 5/5. Functionally, catalyzes the complicated ring closure reaction between the two acyclic compounds 1-deoxy-D-xylulose-5-phosphate (DXP) and 3-amino-2-oxopropyl phosphate (1-amino-acetone-3-phosphate or AAP) to form pyridoxine 5'-phosphate (PNP) and inorganic phosphate. This Albidiferax ferrireducens (strain ATCC BAA-621 / DSM 15236 / T118) (Rhodoferax ferrireducens) protein is Pyridoxine 5'-phosphate synthase.